We begin with the raw amino-acid sequence, 223 residues long: Probable cell wall protein PGA61 (223 aa).

Residues 1 to 16 (MKSGLLLAVILPVAFA) form the signal peptide. The N-linked (GlcNAc...) asparagine glycan is linked to N25. Residues 83 to 134 (GAPSSSSTPTSSTETTSSTEAETTEAETTEQPSSSTSSNTESSKTTILETPS) are disordered. Composition is skewed to low complexity over residues 84 to 103 (APSS…STEA) and 111 to 128 (TEQP…SKTT). N188 carries an N-linked (GlcNAc...) asparagine glycan. N202 is lipidated: GPI-anchor amidated asparagine. Positions 203-223 (GAGRAAVIGSGSLLALLLNFI) are cleaved as a propeptide — removed in mature form.

This sequence belongs to the IHD1 family. In terms of processing, the GPI-anchor is attached to the protein in the endoplasmic reticulum and serves to target the protein to the cell surface. There, the glucosamine-inositol phospholipid moiety is cleaved off and the GPI-modified mannoprotein is covalently attached via its lipidless GPI glycan remnant to the 1,6-beta-glucan of the outer cell wall layer.

It is found in the secreted. It localises to the cell wall. The protein localises to the membrane. In terms of biological role, probable GPI-anchored cell wall protein that may be involved in cell wall organization, hyphal growth, as well as in virulence. The chain is Probable cell wall protein PGA61 (PGA61) from Candida albicans (strain SC5314 / ATCC MYA-2876) (Yeast).